The following is a 571-amino-acid chain: Urease subunit alpha (571 aa).

In terms of domain architecture, Urease spans 133 to 571 (GGIDTHVHFV…LPLTQRYFLF (439 aa)). The Ni(2+) site is built by His-138, His-140, and Lys-221. An N6-carboxylysine modification is found at Lys-221. His-223 lines the substrate pocket. Residues His-250 and His-276 each coordinate Ni(2+). His-324 serves as the catalytic Proton donor. Asp-364 is a Ni(2+) binding site.

This sequence belongs to the metallo-dependent hydrolases superfamily. Urease alpha subunit family. Heterotrimer of UreA (gamma), UreB (beta) and UreC (alpha) subunits. Three heterotrimers associate to form the active enzyme. Ni cation serves as cofactor. Post-translationally, carboxylation allows a single lysine to coordinate two nickel ions.

The protein localises to the cytoplasm. The enzyme catalyses urea + 2 H2O + H(+) = hydrogencarbonate + 2 NH4(+). Its pathway is nitrogen metabolism; urea degradation; CO(2) and NH(3) from urea (urease route): step 1/1. The polypeptide is Urease subunit alpha (Staphylococcus xylosus).